The sequence spans 790 residues: Tumor necrosis factor alpha-induced protein 3 (790 aa).

Residue A2 is modified to N-acetylalanine. A TRAF-binding region spans residues 58–300 (PQFREIIHKA…LTDPENEMKE (243 aa)). An OTU domain is found at 92–263 (LVALKTNGDG…SHHFVPLVTL (172 aa)). The active site involves D100. The active-site Nucleophile is C103. Interaction with ubiquitin stretches follow at residues 157–159 (LCY), 190–192 (SLE), and 224–227 (FAPL). The Proton acceptor role is filled by H256. The segment at 369 to 775 (AQNPMESSLP…ACDHFGNAKC (407 aa)) is interaction with TNIP1. Residues 381–416 (SLMDVKCETPNCPFFMSVNTQPLCHECSERRQKNQN) form an A20-type 1 zinc finger. The interaction with RIPK1 stretch occupies residues 386–453 (KCETPNCPFF…EPLAWNPEEP (68 aa)). C387, C392, C404, and C407 together coordinate Zn(2+). Residues 415–467 (QNKLPKLNSKPGPEGLPGMALGASRGEAYEPLAWNPEEPTGGPHSAPPTAPSP) are disordered. At S459 the chain carries Phosphoserine. A20-type zinc fingers lie at residues 472 to 507 (ETTA…LHAS) and 515 to 548 (HLDP…AEAS). C478, C483, C495, C498, C521, C524, C536, and C539 together coordinate Zn(2+). The segment at 550–580 (SLSTSLPPSCHQRSKSDPSQLVRSPSPHSCH) is disordered. The span at 566 to 576 (DPSQLVRSPSP) shows a compositional bias: polar residues. At S575 the chain carries Phosphoserine. The segment at 601–636 (RTGTSKCRKAGCMYFGTPENKGFCTLCFIEYRENKH) adopts an A20-type 4 zinc-finger fold. The interval 605–655 (SKCRKAGCMYFGTPENKGFCTLCFIEYRENKHLVAASGKASPTASRFQNTI) is required for proteasomal degradation of UBE2N and UBE2D3, TRAF6 deubiquitination, and TAX1BP1 interaction with UBE2N. The segment at 606-790 (KCRKAGCMYF…ECFQFKQMYG (185 aa)) is sufficient for inhibitory activity of TNF-induced NF-kappa-B activity. Residues C607, C612, C624, and C627 each coordinate Zn(2+). S645 bears the Phosphoserine mark. An A20-type 5 zinc finger spans residues 651–686 (FQNTIPCLGRECGTLGSTMFEGYCQKCFIEAQNQRF). Zn(2+)-binding residues include C657, C662, C674, and C677. A compositionally biased stretch (basic and acidic residues) spans 689–705 (AKRTEEQLRSSQRRDVP). A disordered region spans residues 689–712 (AKRTEEQLRSSQRRDVPRTTQSTS). Residues 697-790 (RSSQRRDVPR…ECFQFKQMYG (94 aa)) form a required for lysosomal localization and for TRAF2 lysosomal degradation region. 2 A20-type zinc fingers span residues 710 to 745 (STSR…RMGP) and 756 to 790 (DPPK…QMYG). 8 residues coordinate Zn(2+): C716, C721, C733, C736, C762, C767, C779, and C782.

This sequence belongs to the peptidase C64 family. As to quaternary structure, homodimer. Interacts with TNIP1, TAX1BP1 and TRAF2. Interacts with RNF11, ITCH and TAX1BP1 only after TNF stimulation; these interaction are transient and they are lost after 1 hour of stimulation with TNF. Interacts with YWHAZ and YWHAH. Interacts with IKBKG; the interaction is induced by TNF stimulation and by polyubiquitin. Interacts with RIPK1. Interacts with UBE2N; the interaction requires TAX1BP1. Interacts with TRAF6. Post-translationally, proteolytically cleaved by MALT1 upon TCR stimulation; disrupts NF-kappa-B inhibitory function and results in increased IL-2 production. It is proposed that only a fraction of TNFAIP3 colocalized with TCR and CBM complex is cleaved, leaving the main TNFAIP3 pool intact.

The protein resides in the cytoplasm. It is found in the nucleus. It localises to the lysosome. The enzyme catalyses Thiol-dependent hydrolysis of ester, thioester, amide, peptide and isopeptide bonds formed by the C-terminal Gly of ubiquitin (a 76-residue protein attached to proteins as an intracellular targeting signal).. Ubiquitin-editing enzyme that contains both ubiquitin ligase and deubiquitinase activities. Involved in immune and inflammatory responses signaled by cytokines, such as TNF-alpha and IL-1 beta, or pathogens via Toll-like receptors (TLRs) through terminating NF-kappa-B activity. Essential component of a ubiquitin-editing protein complex, comprising also RNF11, ITCH and TAX1BP1, that ensures the transient nature of inflammatory signaling pathways. In cooperation with TAX1BP1 promotes disassembly of E2-E3 ubiquitin protein ligase complexes in IL-1R and TNFR-1 pathways; affected are at least E3 ligases TRAF6, TRAF2 and BIRC2, and E2 ubiquitin-conjugating enzymes UBE2N and UBE2D3. In cooperation with TAX1BP1 promotes ubiquitination of UBE2N and proteasomal degradation of UBE2N and UBE2D3. Upon TNF stimulation, deubiquitinates 'Lys-63'-polyubiquitin chains on RIPK1 and catalyzes the formation of 'Lys-48'-polyubiquitin chains. This leads to RIPK1 proteasomal degradation and consequently termination of the TNF- or LPS-mediated activation of NF-kappa-B. Deubiquitinates TRAF6 probably acting on 'Lys-63'-linked polyubiquitin. Upon T-cell receptor (TCR)-mediated T-cell activation, deubiquitinates 'Lys-63'-polyubiquitin chains on MALT1 thereby mediating disassociation of the CBM (CARD11:BCL10:MALT1) and IKK complexes and preventing sustained IKK activation. Deubiquitinates NEMO/IKBKG; the function is facilitated by TNIP1 and leads to inhibition of NF-kappa-B activation. Upon stimulation by bacterial peptidoglycans, probably deubiquitinates RIPK2. Can also inhibit I-kappa-B-kinase (IKK) through a non-catalytic mechanism which involves polyubiquitin; polyubiquitin promotes association with IKBKG and prevents IKK MAP3K7-mediated phosphorylation. Targets TRAF2 for lysosomal degradation. In vitro able to deubiquitinate 'Lys-11'-, 'Lys-48'- and 'Lys-63' polyubiquitin chains. Inhibitor of programmed cell death. Has a role in the function of the lymphoid system. Required for LPS-induced production of pro-inflammatory cytokines and IFN beta in LPS-tolerized macrophages. The chain is Tumor necrosis factor alpha-induced protein 3 (TNFAIP3) from Macaca fascicularis (Crab-eating macaque).